Reading from the N-terminus, the 293-residue chain is Formamidopyrimidine-DNA glycosylase (293 aa).

Pro-2 acts as the Schiff-base intermediate with DNA in catalysis. Residue Glu-3 is the Proton donor of the active site. The active-site Proton donor; for beta-elimination activity is Lys-58. 3 residues coordinate DNA: His-104, Arg-127, and Arg-170. An FPG-type zinc finger spans residues 257–293 (SVYGREGKPCRNPACGGTVERVVQSGRSTFFCASCQT). Arg-283 functions as the Proton donor; for delta-elimination activity in the catalytic mechanism.

It belongs to the FPG family. In terms of assembly, monomer. It depends on Zn(2+) as a cofactor.

The catalysed reaction is Hydrolysis of DNA containing ring-opened 7-methylguanine residues, releasing 2,6-diamino-4-hydroxy-5-(N-methyl)formamidopyrimidine.. It carries out the reaction 2'-deoxyribonucleotide-(2'-deoxyribose 5'-phosphate)-2'-deoxyribonucleotide-DNA = a 3'-end 2'-deoxyribonucleotide-(2,3-dehydro-2,3-deoxyribose 5'-phosphate)-DNA + a 5'-end 5'-phospho-2'-deoxyribonucleoside-DNA + H(+). Its function is as follows. Involved in base excision repair of DNA damaged by oxidation or by mutagenic agents. Acts as a DNA glycosylase that recognizes and removes damaged bases. Has a preference for oxidized purines, such as 7,8-dihydro-8-oxoguanine (8-oxoG). Has AP (apurinic/apyrimidinic) lyase activity and introduces nicks in the DNA strand. Cleaves the DNA backbone by beta-delta elimination to generate a single-strand break at the site of the removed base with both 3'- and 5'-phosphates. This chain is Formamidopyrimidine-DNA glycosylase, found in Brucella canis (strain ATCC 23365 / NCTC 10854 / RM-666).